We begin with the raw amino-acid sequence, 708 residues long: ATP-dependent DNA helicase Hel308 (708 aa).

ATP is bound by residues Gln28 and 46 to 53; that span reads TATASGKS. Residues 33–198 enclose the Helicase ATP-binding domain; it reads RAGIFDGRSV…WLGARLVESS (166 aa). Positions 143–146 match the DEAH box motif; the sequence is DEIH. A Helicase C-terminal domain is found at 231–429; that stretch reads EVALAVDAVA…EPNLRAHVLG (199 aa).

Belongs to the helicase family. Hel308 subfamily. In terms of assembly, monomer.

It carries out the reaction Couples ATP hydrolysis with the unwinding of duplex DNA by translocating in the 3'-5' direction.. The catalysed reaction is ATP + H2O = ADP + phosphate + H(+). DNA-dependent ATPase and 3'-5' DNA helicase that may be involved in repair of stalled replication forks. In Pyrobaculum calidifontis (strain DSM 21063 / JCM 11548 / VA1), this protein is ATP-dependent DNA helicase Hel308.